Consider the following 77-residue polypeptide: MSDIAARVKKIVVEHLNVDEDKVVDSASFIDDLGADSLDTVELVMAFEEEFGIEIPDDAAETIQTFGDATKFISEAQ.

The 76-residue stretch at 2–77 (SDIAARVKKI…DATKFISEAQ (76 aa)) folds into the Carrier domain. Ser-37 bears the O-(pantetheine 4'-phosphoryl)serine mark.

Belongs to the acyl carrier protein (ACP) family. 4'-phosphopantetheine is transferred from CoA to a specific serine of apo-ACP by AcpS. This modification is essential for activity because fatty acids are bound in thioester linkage to the sulfhydryl of the prosthetic group.

The protein resides in the cytoplasm. The protein operates within lipid metabolism; fatty acid biosynthesis. Carrier of the growing fatty acid chain in fatty acid biosynthesis. The protein is Acyl carrier protein of Jannaschia sp. (strain CCS1).